We begin with the raw amino-acid sequence, 558 residues long: Ubiquitin carboxyl-terminal hydrolase 30 homolog (558 aa).

Residues 6–26 (ILMAAGVTVAAVVGAFVFWGP) form a helical membrane-spanning segment. One can recognise a USP domain in the interval 39–550 (AGLHNFGLTC…PAYLLFYDRG (512 aa)). The active-site Nucleophile is the C48. Residues 267 to 300 (LATPMLGGERSSRPRLPQSQQQQDEGLNRRVSSS) are disordered. Over residues 280-289 (PRLPQSQQQQ) the composition is skewed to low complexity. The active-site Proton acceptor is the H506.

The protein belongs to the peptidase C19 family.

It localises to the mitochondrion outer membrane. It catalyses the reaction Thiol-dependent hydrolysis of ester, thioester, amide, peptide and isopeptide bonds formed by the C-terminal Gly of ubiquitin (a 76-residue protein attached to proteins as an intracellular targeting signal).. Functionally, deubiquitinating enzyme that acts as a key inhibitor of mitophagy by counteracting the action of parkin (park). This chain is Ubiquitin carboxyl-terminal hydrolase 30 homolog, found in Drosophila melanogaster (Fruit fly).